Reading from the N-terminus, the 204-residue chain is Imidazole glycerol phosphate synthase subunit HisH (204 aa).

Residues 1–204 (MIKIVDYGLG…MTLLKNFSEI (204 aa)) form the Glutamine amidotransferase type-1 domain. The active-site Nucleophile is Cys80. Residues His186 and Glu188 contribute to the active site.

In terms of assembly, heterodimer of HisH and HisF.

The protein localises to the cytoplasm. It catalyses the reaction 5-[(5-phospho-1-deoxy-D-ribulos-1-ylimino)methylamino]-1-(5-phospho-beta-D-ribosyl)imidazole-4-carboxamide + L-glutamine = D-erythro-1-(imidazol-4-yl)glycerol 3-phosphate + 5-amino-1-(5-phospho-beta-D-ribosyl)imidazole-4-carboxamide + L-glutamate + H(+). The catalysed reaction is L-glutamine + H2O = L-glutamate + NH4(+). It functions in the pathway amino-acid biosynthesis; L-histidine biosynthesis; L-histidine from 5-phospho-alpha-D-ribose 1-diphosphate: step 5/9. IGPS catalyzes the conversion of PRFAR and glutamine to IGP, AICAR and glutamate. The HisH subunit catalyzes the hydrolysis of glutamine to glutamate and ammonia as part of the synthesis of IGP and AICAR. The resulting ammonia molecule is channeled to the active site of HisF. The polypeptide is Imidazole glycerol phosphate synthase subunit HisH (Bdellovibrio bacteriovorus (strain ATCC 15356 / DSM 50701 / NCIMB 9529 / HD100)).